Consider the following 191-residue polypeptide: NF-kappa-B inhibitor-interacting Ras-like protein 2 (191 aa).

The segment at 1–191 (MGKSCKVVVC…KNKGSGSLDG (191 aa)) is small GTPase-like. GTP is bound at residue 11 to 18 (GQASVGKT). The Effector region signature appears at 35–43 (MIETQEDIY). GTP-binding positions include 61 to 65 (DTRGL) and 120 to 123 (NKCD). Residues 169-191 (TQPQSKSAFPLSRKNKGSGSLDG) are disordered.

The protein belongs to the small GTPase superfamily. Ras family. KappaB-Ras subfamily. As to quaternary structure, interacts with both NF-kappa-B inhibitor alpha (NFKBIA) and beta (NFKBIB) in vitro. However, it probably only interacts with NFKBIB in vivo. Interacts with GFOD1. Widely expressed.

The protein resides in the cytoplasm. Atypical Ras-like protein that acts as a potent regulator of NF-kappa-B activity by preventing the degradation of NF-kappa-B inhibitor beta (NFKBIB) by most signals, explaining why NFKBIB is more resistant to degradation. May act by blocking phosphorylation of NFKBIB and nuclear localization of p65/RELA NF-kappa-B subunit. It is unclear whether it acts as a GTPase. Both GTP- and GDP-bound forms block phosphorylation of NFKBIB. The protein is NF-kappa-B inhibitor-interacting Ras-like protein 2 (NKIRAS2) of Homo sapiens (Human).